A 355-amino-acid polypeptide reads, in one-letter code: UDP-3-O-acylglucosamine N-acyltransferase (355 aa).

The active-site Proton acceptor is the His258.

It belongs to the transferase hexapeptide repeat family. LpxD subfamily. As to quaternary structure, homotrimer.

It carries out the reaction a UDP-3-O-[(3R)-3-hydroxyacyl]-alpha-D-glucosamine + a (3R)-hydroxyacyl-[ACP] = a UDP-2-N,3-O-bis[(3R)-3-hydroxyacyl]-alpha-D-glucosamine + holo-[ACP] + H(+). Its pathway is bacterial outer membrane biogenesis; LPS lipid A biosynthesis. Functionally, catalyzes the N-acylation of UDP-3-O-acylglucosamine using 3-hydroxyacyl-ACP as the acyl donor. Is involved in the biosynthesis of lipid A, a phosphorylated glycolipid that anchors the lipopolysaccharide to the outer membrane of the cell. The protein is UDP-3-O-acylglucosamine N-acyltransferase of Rhizobium rhizogenes (strain K84 / ATCC BAA-868) (Agrobacterium radiobacter).